The chain runs to 361 residues: Phospho-N-acetylmuramoyl-pentapeptide-transferase (361 aa).

10 consecutive transmembrane segments (helical) span residues 28-48 (LAALTALSISFLIGPAMIRSL), 73-93 (TMGGALILMAVIITTLLWADL), 97-117 (YIWLVLLTTLGFGAIGWVDDY), 134-154 (FFWQSIIALLVAVYLAMTAEL), 168-188 (VAIPLGSFLFIILTYLVIVGS), 200-220 (GLAIMPTVMISGALAIFAYVA), 237-257 (AGELAVFCGALAGAGLAFLWF), 264-284 (VFMGDVGALALGAALGVITVI), 289-309 (IVLVIMGGVFVMEALSVMIQV), and 338-358 (QVVVRFWIITIILVLIGLSTL).

It belongs to the glycosyltransferase 4 family. MraY subfamily. The cofactor is Mg(2+).

It localises to the cell inner membrane. It catalyses the reaction UDP-N-acetyl-alpha-D-muramoyl-L-alanyl-gamma-D-glutamyl-meso-2,6-diaminopimeloyl-D-alanyl-D-alanine + di-trans,octa-cis-undecaprenyl phosphate = di-trans,octa-cis-undecaprenyl diphospho-N-acetyl-alpha-D-muramoyl-L-alanyl-D-glutamyl-meso-2,6-diaminopimeloyl-D-alanyl-D-alanine + UMP. It participates in cell wall biogenesis; peptidoglycan biosynthesis. Catalyzes the initial step of the lipid cycle reactions in the biosynthesis of the cell wall peptidoglycan: transfers peptidoglycan precursor phospho-MurNAc-pentapeptide from UDP-MurNAc-pentapeptide onto the lipid carrier undecaprenyl phosphate, yielding undecaprenyl-pyrophosphoryl-MurNAc-pentapeptide, known as lipid I. The chain is Phospho-N-acetylmuramoyl-pentapeptide-transferase from Nitrosomonas eutropha (strain DSM 101675 / C91 / Nm57).